A 346-amino-acid chain; its full sequence is Phosphate acyltransferase (346 aa).

This sequence belongs to the PlsX family. Homodimer. Probably interacts with PlsY.

Its subcellular location is the cytoplasm. It catalyses the reaction a fatty acyl-[ACP] + phosphate = an acyl phosphate + holo-[ACP]. It participates in lipid metabolism; phospholipid metabolism. Functionally, catalyzes the reversible formation of acyl-phosphate (acyl-PO(4)) from acyl-[acyl-carrier-protein] (acyl-ACP). This enzyme utilizes acyl-ACP as fatty acyl donor, but not acyl-CoA. This is Phosphate acyltransferase from Brucella melitensis biotype 2 (strain ATCC 23457).